The chain runs to 115 residues: Protein VCF2 (115 aa).

Positions 1 to 12 (MGGCPVRKRRRN) are enriched in basic residues. The interval 1 to 70 (MGGCPVRKRR…GPEGNLNQIV (70 aa)) is disordered. The segment covering 33–44 (FQDSQDTEFSWS) has biased composition (polar residues).

The protein belongs to the VCF family.

The protein is Protein VCF2 of Homo sapiens (Human).